We begin with the raw amino-acid sequence, 369 residues long: Dual specificity protein phosphatase 1-B (369 aa).

Residues 21–138 (RAHKCLILDC…FSSQCPEFCN (118 aa)) enclose the Rhodanese domain. T168 is modified (phosphothreonine; by MAPK1). In terms of domain architecture, Tyrosine-protein phosphatase spans 175-316 (GPVEILPFLY…LLQFESQVLA (142 aa)). Residue C260 is the Phosphocysteine intermediate of the active site.

Belongs to the protein-tyrosine phosphatase family. Non-receptor class dual specificity subfamily. In terms of processing, phosphorylated by MAPK1/ERK2 at Thr-168 and at one or more serine residues in a progesterone-dependent manner. Phosphorylation reduces its rate of degradation but does not seem to affect phosphatase activity.

Its subcellular location is the nucleus. The enzyme catalyses O-phospho-L-seryl-[protein] + H2O = L-seryl-[protein] + phosphate. It catalyses the reaction O-phospho-L-threonyl-[protein] + H2O = L-threonyl-[protein] + phosphate. It carries out the reaction O-phospho-L-tyrosyl-[protein] + H2O = L-tyrosyl-[protein] + phosphate. In terms of biological role, dual specificity phosphatase that dephosphorylates MAP kinase MAPK1/ERK2 on both 'Thr-188' and 'Tyr-190', regulating its activity during the meiotic cell cycle. The sequence is that of Dual specificity protein phosphatase 1-B from Xenopus laevis (African clawed frog).